A 217-amino-acid chain; its full sequence is Small ribosomal subunit protein eS6 (217 aa).

It belongs to the eukaryotic ribosomal protein eS6 family. In terms of processing, phosphorylated.

The sequence is that of Small ribosomal subunit protein eS6 (RPS6) from Encephalitozoon cuniculi (strain GB-M1) (Microsporidian parasite).